We begin with the raw amino-acid sequence, 360 residues long: Protein OSB4, chloroplastic (360 aa).

Residues 1–61 constitute a chloroplast transit peptide; that stretch reads MQFLGRSISK…AEKSSEEWPR (61 aa). A disordered region spans residues 28–64; sequence SQQFLSTSSTESSSRTRGGGGGNRAEKSSEEWPRPME. A compositionally biased stretch (low complexity) spans 33–43; sequence STSSTESSSRT. Residues 51–61 are compositionally biased toward basic and acidic residues; it reads RAEKSSEEWPR. The 118-residue stretch at 71–188 folds into the SSB domain; that stretch reads IANSIDLIGY…VMVRDLHYIE (118 aa). PDF region regions lie at residues 224 to 276 and 296 to 344; these read WFDL…SELK and WKDL…EKLP.

It localises to the plastid. It is found in the chloroplast. Functionally, binds single-stranded DNA. The chain is Protein OSB4, chloroplastic (OSB4) from Arabidopsis thaliana (Mouse-ear cress).